A 352-amino-acid polypeptide reads, in one-letter code: ATPase GET3 (352 aa).

Residue 26 to 33 participates in ATP binding; it reads KGGVGKTT. Asp-57 is a catalytic residue. Residues Glu-243 and Asn-270 each coordinate ATP. The Zn(2+) site is built by Cys-283 and Cys-286.

It belongs to the arsA ATPase family. As to quaternary structure, homodimer. Component of the Golgi to ER traffic (GET) complex, which is composed of GET1, GET2 and GET3. Within the complex, GET1 and GET2 form a heterotetramer which is stabilized by phosphatidylinositol binding and which binds to the GET3 homodimer. Interacts with the chloride channel protein GEF1.

The protein resides in the cytoplasm. It localises to the endoplasmic reticulum. It is found in the golgi apparatus. Functionally, ATPase required for the post-translational delivery of tail-anchored (TA) proteins to the endoplasmic reticulum. Recognizes and selectively binds the transmembrane domain of TA proteins in the cytosol. This complex then targets to the endoplasmic reticulum by membrane-bound receptors GET1 and GET2, where the tail-anchored protein is released for insertion. This process is regulated by ATP binding and hydrolysis. ATP binding drives the homodimer towards the closed dimer state, facilitating recognition of newly synthesized TA membrane proteins. ATP hydrolysis is required for insertion. Subsequently, the homodimer reverts towards the open dimer state, lowering its affinity for the GET1-GET2 receptor, and returning it to the cytosol to initiate a new round of targeting. Cooperates with the HDEL receptor ERD2 to mediate the ATP-dependent retrieval of resident ER proteins that contain a C-terminal H-D-E-L retention signal from the Golgi to the ER. Involved in low-level resistance to the oxyanions arsenite and arsenate, and in heat tolerance. This is ATPase GET3 from Vanderwaltozyma polyspora (strain ATCC 22028 / DSM 70294 / BCRC 21397 / CBS 2163 / NBRC 10782 / NRRL Y-8283 / UCD 57-17) (Kluyveromyces polysporus).